Reading from the N-terminus, the 243-residue chain is Transmembrane protein 174 (243 aa).

2 helical membrane passes run 40–60 (LLFS…MGWI) and 73–93 (LLGP…VCKF).

Interacts with SLC34A1; regulates SLC34A1 internalization by PTH and FGF23. In terms of tissue distribution, kidney specific. Expressed in renal primary proximal tubule cells.

The protein resides in the endoplasmic reticulum membrane. It localises to the apical cell membrane. Its function is as follows. Regulator of plasma phosphate homeostasis. Decreases serum inorganic phosphate (Pi) uptake by regulating the sodium-phosphate cotransporter SLC34A1 trafficking by PTH and FGF23 in the kidney. This chain is Transmembrane protein 174 (Tmem174), found in Mus musculus (Mouse).